The chain runs to 249 residues: Probable transcriptional regulatory protein LBL_2537 (249 aa).

This sequence belongs to the TACO1 family.

It localises to the cytoplasm. This is Probable transcriptional regulatory protein LBL_2537 from Leptospira borgpetersenii serovar Hardjo-bovis (strain L550).